Reading from the N-terminus, the 610-residue chain is Elongation factor 4 (610 aa).

The tr-type G domain maps to 11–193 (EKIRNFSIIA…QIVEKVPAPT (183 aa)). Residues 23–28 (DHGKST) and 140–143 (NKID) each bind GTP.

The protein belongs to the TRAFAC class translation factor GTPase superfamily. Classic translation factor GTPase family. LepA subfamily.

The protein resides in the cell membrane. It catalyses the reaction GTP + H2O = GDP + phosphate + H(+). Functionally, required for accurate and efficient protein synthesis under certain stress conditions. May act as a fidelity factor of the translation reaction, by catalyzing a one-codon backward translocation of tRNAs on improperly translocated ribosomes. Back-translocation proceeds from a post-translocation (POST) complex to a pre-translocation (PRE) complex, thus giving elongation factor G a second chance to translocate the tRNAs correctly. Binds to ribosomes in a GTP-dependent manner. In Streptococcus pyogenes serotype M3 (strain ATCC BAA-595 / MGAS315), this protein is Elongation factor 4.